Consider the following 210-residue polypeptide: Calcineurin B-like protein 4 (210 aa).

The N-myristoyl glycine moiety is linked to residue glycine 2. EF-hand domains are found at residues 31 to 66 (EVEALRELYNKMSYSIIKDGLIHKEEFQLALFRNSR), 67 to 102 (KANLFADRVFDLFDLKRNGVIEFGEFVRSLSVFHPK), 104 to 139 (PKSEKTAFAFKLYDLRGTGYIEKEELREMVLALLDE), and 148 to 183 (AVEAIVDNTFSQADSNGDGRIDPEEWEEFVKANPAS). Ca(2+)-binding residues include aspartate 161, asparagine 163, aspartate 165, arginine 167, and glutamate 172.

This sequence belongs to the calcineurin regulatory subunit family. In terms of assembly, homodimer. Interacts with CIPK24. Expressed in leaves.

It localises to the cell membrane. Its function is as follows. Acts as a calcium sensor involved in the regulatory pathway for the control of intracellular Na(+) and K(+) homeostasis and salt tolerance. Operates in synergy with CIPK24 to activate the plasma membrane Na(+)/H(+) antiporter SOS1. May function as positive regulator of salt stress responses. CBL proteins interact with CIPK serine-threonine protein kinases. Binding of a CBL protein to the regulatory NAF domain of a CIPK protein lead to the activation of the kinase in a calcium-dependent manner. The protein is Calcineurin B-like protein 4 (CBL4) of Oryza sativa subsp. japonica (Rice).